The primary structure comprises 147 residues: Cyanate hydratase (147 aa).

Catalysis depends on residues arginine 88, glutamate 91, and serine 114.

It belongs to the cyanase family.

It catalyses the reaction cyanate + hydrogencarbonate + 3 H(+) = NH4(+) + 2 CO2. Catalyzes the reaction of cyanate with bicarbonate to produce ammonia and carbon dioxide. In Albidiferax ferrireducens (strain ATCC BAA-621 / DSM 15236 / T118) (Rhodoferax ferrireducens), this protein is Cyanate hydratase.